We begin with the raw amino-acid sequence, 396 residues long: Na(+)/H(+) antiporter NhaA (396 aa).

11 helical membrane-spanning segments follow: residues 17–37 (FSGLLLILFCFLAIFISNTNF), 59–79 (FSLTNIVNDILMTFFFLEIGI), 97–117 (ILPGIAAIGGMIFPALIYNFI), 127–147 (GWAITVATDIAFAVGVLKILG), 156–176 (IFLLSLAIFDDIGAILIIAFF), 181–201 (IDQYMILLSTLVILTILSINY), 206–226 (CIYIYIIFGILLWESIFLSGI), 260–280 (SLSFLNKYFILPIFAFFNSGI), 292–312 (LLPFGIFFGLVLGKPIGVFLF), 333–353 (IAGISFLCGIGFTMSIFISNL), and 368–388 (FSILISSIVSSVIGFLFLYFL).

The protein belongs to the NhaA Na(+)/H(+) (TC 2.A.33) antiporter family.

It localises to the cell membrane. It carries out the reaction Na(+)(in) + 2 H(+)(out) = Na(+)(out) + 2 H(+)(in). Its function is as follows. Na(+)/H(+) antiporter that extrudes sodium in exchange for external protons. The protein is Na(+)/H(+) antiporter NhaA of Wigglesworthia glossinidia brevipalpis.